Consider the following 251-residue polypeptide: Ubiquitin-conjugating enzyme E2 6 (251 aa).

The Cytoplasmic segment spans residues 1-229; it reads MASIQANKRL…DQDKNPGENS (229 aa). Residues 5 to 154 form the UBC core domain; that stretch reads QANKRLTKEY…YSNFKFKNMF (150 aa). Catalysis depends on cysteine 87, which acts as the Glycyl thioester intermediate. Residues 173-185 are compositionally biased toward basic and acidic residues; sequence AESKGAQQEENKA. A disordered region spans residues 173–200; the sequence is AESKGAQQEENKAQKLATEKATSLDDIS. A helical membrane pass occupies residues 230–250; the sequence is NIKSLLCLILAIAIFFVGLIM.

Belongs to the ubiquitin-conjugating enzyme family.

It localises to the endoplasmic reticulum membrane. The catalysed reaction is S-ubiquitinyl-[E1 ubiquitin-activating enzyme]-L-cysteine + [E2 ubiquitin-conjugating enzyme]-L-cysteine = [E1 ubiquitin-activating enzyme]-L-cysteine + S-ubiquitinyl-[E2 ubiquitin-conjugating enzyme]-L-cysteine.. It functions in the pathway protein modification; protein ubiquitination. Catalyzes the covalent attachment of ubiquitin to other proteins. Functions in degradation of misfolded or regulated proteins localized in the endoplasmic reticulum (ER) lumen or membrane via the ubiquitin-proteasome system. Cognate E2 conjugating enzyme for the DOA10 ubiquitin ligase complex, which is part of the ERAD-C pathway responsible for the rapid degradation of membrane proteins with misfolded cytoplasmic domains. The polypeptide is Ubiquitin-conjugating enzyme E2 6 (UBC6) (Kluyveromyces lactis (strain ATCC 8585 / CBS 2359 / DSM 70799 / NBRC 1267 / NRRL Y-1140 / WM37) (Yeast)).